Consider the following 313-residue polypeptide: Syndecan-1 (313 aa).

Positions 1-22 are cleaved as a signal peptide; that stretch reads MRRAALWLWLCALALRLQPALP. Residues 23–257 are Extracellular-facing; it reads QIVTANVPPE…GLLDRKEVLG (235 aa). Disordered regions lie at residues 27 to 58 and 95 to 186; these read ANVPPEDQDGSGDDSDNFSGSGTGALPDMTLS and AGEK…VEDG. The span at 32-42 shows a compositional bias: acidic residues; it reads EDQDGSGDDSD. An O-linked (Xyl...) (chondroitin sulfate) serine glycan is attached at Ser-37. N-linked (GlcNAc...) asparagine glycosylation is present at Asn-43. O-linked (Xyl...) (heparan sulfate) serine glycans are attached at residues Ser-45 and Ser-47. The span at 97-129 shows a compositional bias: basic and acidic residues; sequence EKPEEGEPVAHVEAEPDFTARDKEKEATTRPRE. Residues 135–154 show a composition bias toward low complexity; that stretch reads VTQQASTAARATTAQASVTS. Residues Ser-209 and Ser-219 are each glycosylated (O-linked (Xyl...) (chondroitin sulfate) serine). Residues 258–278 traverse the membrane as a helical segment; that stretch reads GVIAGGLVGLIFAVCLVAFML. At 279 to 313 the chain is on the cytoplasmic side; it reads YRMKKKDEGSYSLEEPKQANGGAYQKPTKQEEFYA. Residues 286–295 show a composition bias toward basic and acidic residues; that stretch reads EGSYSLEEPK. The disordered stretch occupies residues 286–313; sequence EGSYSLEEPKQANGGAYQKPTKQEEFYA. Residue Ser-288 is modified to Phosphoserine.

Belongs to the syndecan proteoglycan family. Interacts with CDCP1. Interacts (via C-terminus) with TIAM1 (via PDZ domain). Interacts with MDK. In terms of processing, shedding is enhanced by a number of factors such as heparanase, thrombin or EGF. Also by stress and wound healing. PMA-mediated shedding is inhibited by TIMP3.

It is found in the membrane. Its subcellular location is the secreted. The protein localises to the extracellular exosome. Functionally, cell surface proteoglycan that contains both heparan sulfate and chondroitin sulfate and that links the cytoskeleton to the interstitial matrix. Regulates exosome biogenesis in concert with SDCBP and PDCD6IP. Able to induce its own expression in dental mesenchymal cells and also in the neighboring dental epithelial cells via an MSX1-mediated pathway. The chain is Syndecan-1 from Rattus norvegicus (Rat).